The following is a 275-amino-acid chain: MALVKTKPTSPGRRFVVKVVHPELHKGDPYAPLVESKNRINSRNNQGRITVRRRGGGHKRNYRIIDFKRDKEGIEGKVERLEYDPNRSAHIALVLYPDGERRYIIAPKGVHKGSKVVSGREAPIRPGNCLPLQNIPLGATIHNIELKPGKGAQLVRSAGASAQLAAKEGIYAIIRMRSGETRKILAVCRACIGEVSNSEHNLRSLGKAGAKRWRGRRPTVRGVAMNPVDHPHGGGEGKTSGGRHPVSPTGKPTKGYKTRRNKRTSNMIIRDRRKK.

The interval 208-275 (AGAKRWRGRR…NMIIRDRRKK (68 aa)) is disordered. Composition is skewed to basic residues over residues 209 to 219 (GAKRWRGRRPT) and 254 to 263 (KGYKTRRNKR).

It belongs to the universal ribosomal protein uL2 family. In terms of assembly, part of the 50S ribosomal subunit. Forms a bridge to the 30S subunit in the 70S ribosome.

In terms of biological role, one of the primary rRNA binding proteins. Required for association of the 30S and 50S subunits to form the 70S ribosome, for tRNA binding and peptide bond formation. It has been suggested to have peptidyltransferase activity; this is somewhat controversial. Makes several contacts with the 16S rRNA in the 70S ribosome. This chain is Large ribosomal subunit protein uL2, found in Coxiella burnetii (strain CbuG_Q212) (Coxiella burnetii (strain Q212)).